A 289-amino-acid polypeptide reads, in one-letter code: Protoheme IX farnesyltransferase (289 aa).

The next 9 membrane-spanning stretches (helical) occupy residues 9-29 (VALM…PVMM), 35-55 (MPSL…AGSA), 89-109 (LTFG…LVNW), 110-130 (PSAL…TLGL), 138-158 (IVIG…AVTG), 164-184 (AVLL…ALAM), 188-208 (DDYA…EVVT), 228-248 (VAHT…WFLA), and 269-289 (FHMS…TAVV).

Belongs to the UbiA prenyltransferase family. Protoheme IX farnesyltransferase subfamily.

Its subcellular location is the cell membrane. The catalysed reaction is heme b + (2E,6E)-farnesyl diphosphate + H2O = Fe(II)-heme o + diphosphate. It participates in porphyrin-containing compound metabolism; heme O biosynthesis; heme O from protoheme: step 1/1. In terms of biological role, converts heme B (protoheme IX) to heme O by substitution of the vinyl group on carbon 2 of heme B porphyrin ring with a hydroxyethyl farnesyl side group. The polypeptide is Protoheme IX farnesyltransferase (Frankia alni (strain DSM 45986 / CECT 9034 / ACN14a)).